Reading from the N-terminus, the 205-residue chain is Dephospho-CoA kinase (205 aa).

A DPCK domain is found at 13–205 (RIGLTGGIAS…KWINTIREIL (193 aa)). Position 21 to 26 (21 to 26 (ASGKST)) interacts with ATP.

It belongs to the CoaE family.

Its subcellular location is the cytoplasm. It carries out the reaction 3'-dephospho-CoA + ATP = ADP + CoA + H(+). It participates in cofactor biosynthesis; coenzyme A biosynthesis; CoA from (R)-pantothenate: step 5/5. Catalyzes the phosphorylation of the 3'-hydroxyl group of dephosphocoenzyme A to form coenzyme A. In Prochlorococcus marinus (strain MIT 9312), this protein is Dephospho-CoA kinase.